A 148-amino-acid chain; its full sequence is Large ribosomal subunit protein bL9 (148 aa).

The protein belongs to the bacterial ribosomal protein bL9 family.

Its function is as follows. Binds to the 23S rRNA. This Syntrophotalea carbinolica (strain DSM 2380 / NBRC 103641 / GraBd1) (Pelobacter carbinolicus) protein is Large ribosomal subunit protein bL9.